The chain runs to 401 residues: MNEVAIPSVLLDVPVPAATVHKQNLLDLDREGLEHFFADTLGEARYRAHQMMKWIHHRYVTDFDQMTDLGKALRAKLHQHAEVLVPNVVFDKPSTDGTHKWLLAMGTDGKNAIETVYIPDKGRGTLCVSSQVGCGLNCTFCSTATQGFNRNLTTAEIIGQVWVAARHLGNVPHQQRRLTNVVMMGMGEPLMNFDNVVRAMSVMRDDLGYGLASKRVTLSTSGLVPMIDRLATESDVSLAVSLHAANDALRESLVPLNKKYPIAELMESCARYLRGNKKRDSVTFEYTLMKGINDQPEHARQLARLMRQFDNAVQSKDAGKVNLIPFNPFPGTRYERSGETEIRAFQKILLDAQVLTMVRRTRGDDIDAACGQLKGQVMDRTRRQAEFRRTLEGQADRDAAA.

Glu-114 acts as the Proton acceptor in catalysis. The Radical SAM core domain maps to 120–365 (DKGRGTLCVS…TMVRRTRGDD (246 aa)). The cysteines at positions 127 and 370 are disulfide-linked. 3 residues coordinate [4Fe-4S] cluster: Cys-134, Cys-138, and Cys-141. Residues 187–188 (GE), Ser-219, 241–243 (SLH), and Asn-327 contribute to the S-adenosyl-L-methionine site. Cys-370 acts as the S-methylcysteine intermediate in catalysis.

It belongs to the radical SAM superfamily. RlmN family. It depends on [4Fe-4S] cluster as a cofactor.

It localises to the cytoplasm. It catalyses the reaction adenosine(2503) in 23S rRNA + 2 reduced [2Fe-2S]-[ferredoxin] + 2 S-adenosyl-L-methionine = 2-methyladenosine(2503) in 23S rRNA + 5'-deoxyadenosine + L-methionine + 2 oxidized [2Fe-2S]-[ferredoxin] + S-adenosyl-L-homocysteine. The catalysed reaction is adenosine(37) in tRNA + 2 reduced [2Fe-2S]-[ferredoxin] + 2 S-adenosyl-L-methionine = 2-methyladenosine(37) in tRNA + 5'-deoxyadenosine + L-methionine + 2 oxidized [2Fe-2S]-[ferredoxin] + S-adenosyl-L-homocysteine. Specifically methylates position 2 of adenine 2503 in 23S rRNA and position 2 of adenine 37 in tRNAs. m2A2503 modification seems to play a crucial role in the proofreading step occurring at the peptidyl transferase center and thus would serve to optimize ribosomal fidelity. This Xanthomonas campestris pv. campestris (strain B100) protein is Dual-specificity RNA methyltransferase RlmN.